The primary structure comprises 101 residues: Urease subunit beta (101 aa).

Belongs to the urease beta subunit family. Heterotrimer of UreA (gamma), UreB (beta) and UreC (alpha) subunits. Three heterotrimers associate to form the active enzyme.

The protein localises to the cytoplasm. It carries out the reaction urea + 2 H2O + H(+) = hydrogencarbonate + 2 NH4(+). It functions in the pathway nitrogen metabolism; urea degradation; CO(2) and NH(3) from urea (urease route): step 1/1. This chain is Urease subunit beta, found in Rhizobium rhizogenes (strain K84 / ATCC BAA-868) (Agrobacterium radiobacter).